Here is a 147-residue protein sequence, read N- to C-terminus: Large ribosomal subunit protein uL16 (147 aa).

This sequence belongs to the universal ribosomal protein uL16 family. In terms of assembly, part of the 50S ribosomal subunit.

In terms of biological role, binds 23S rRNA and is also seen to make contacts with the A and possibly P site tRNAs. This is Large ribosomal subunit protein uL16 from Lactobacillus delbrueckii subsp. bulgaricus (strain ATCC 11842 / DSM 20081 / BCRC 10696 / JCM 1002 / NBRC 13953 / NCIMB 11778 / NCTC 12712 / WDCM 00102 / Lb 14).